The primary structure comprises 227 residues: Uracil-DNA glycosylase (227 aa).

The active-site Proton acceptor is Asp-64.

This sequence belongs to the uracil-DNA glycosylase (UDG) superfamily. UNG family.

The protein localises to the cytoplasm. It carries out the reaction Hydrolyzes single-stranded DNA or mismatched double-stranded DNA and polynucleotides, releasing free uracil.. Functionally, excises uracil residues from the DNA which can arise as a result of misincorporation of dUMP residues by DNA polymerase or due to deamination of cytosine. The chain is Uracil-DNA glycosylase from Serratia proteamaculans (strain 568).